The chain runs to 538 residues: Putative cysteine ligase BshC (538 aa).

A coiled-coil region spans residues Lys460–Asn485.

This sequence belongs to the BshC family.

Its function is as follows. Involved in bacillithiol (BSH) biosynthesis. May catalyze the last step of the pathway, the addition of cysteine to glucosamine malate (GlcN-Mal) to generate BSH. This Bacillus cereus (strain Q1) protein is Putative cysteine ligase BshC.